Reading from the N-terminus, the 846-residue chain is Auxin response factor 2A (846 aa).

A compositionally biased stretch (polar residues) spans 1-12 (MAASEVSIQGYS). The segment at 1–30 (MAASEVSIQGYSEPSDGSRPVSETGRSSSG) is disordered. Positions 146–248 (FCKTLTASDT…ELRVGVRRAM (103 aa)) form a DNA-binding region, TF-B3. 2 disordered regions span residues 380–423 (PPAL…HSQA) and 660–693 (DMNI…GVAA). 2 stretches are compositionally biased toward polar residues: residues 398 to 408 (ILPTSPDSSVL) and 414 to 423 (SRATADHSQA). A compositionally biased stretch (basic and acidic residues) spans 675-693 (SDQRSEQSKGSKVDDGVAA). The region spanning 720 to 804 (RSCTKVHKQG…RKIFIYTKEE (85 aa)) is the PB1 domain. Composition is skewed to polar residues over residues 809-824 (NPGT…SSVA) and 836-846 (QLPSESGQAES). Residues 809-846 (NPGTLNSKGEDTSSVAEGSDAKEVKNLQLPSESGQAES) are disordered.

Belongs to the ARF family. Homodimers and heterodimers. Interacts with ASR1. Expressed in root, leaf and flower. Expressed in flower buds about three days before opening including ovary, petal and sepal with the highest in stamen. Expressed in stem. Expressed in fruit. Expressed in seeds.

The protein resides in the nucleus. In terms of biological role, auxin response factors (ARFs) are transcriptional factors that bind specifically to the DNA sequence 5'-TGTCTC-3' found in the auxin-responsive promoter elements (AuxREs). Could act as transcriptional activator or repressor. Involved in the control of fruit ripening process. Regulates expression of a number of ripening regulators, transcription factors, and ethylene biosynthesis and signaling components. May act as a transcriptional repressor of auxin-responsive genes. Regulates vegetative growth, lateral root formation and flower organ senescence, possibly partially by regulating gene expression of auxin and ethylene response factor (ERF) genes. Plays a negative role in axillary shoot meristem formation. The chain is Auxin response factor 2A from Solanum lycopersicum (Tomato).